Reading from the N-terminus, the 510-residue chain is P-(S)-hydroxymandelonitrile lyase (510 aa).

Residues 1–34 (MAVFISSSGSPGRATATTTTTTTLLLAVLAAAAA) form the signal peptide. 116 to 118 (NGG) lines the substrate pocket. Cystine bridges form between Cys-121-Cys-377, Cys-277-Cys-289, and Cys-313-Cys-344. Asn-172 carries an N-linked (GlcNAc...) asparagine glycan. 212-213 (ES) contacts substrate. Ser-213 is a catalytic residue. Asn-365 is a glycosylation site (N-linked (GlcNAc...) asparagine). Catalysis depends on residues Asp-414 and His-469. Residue 465-469 (SGAGH) coordinates substrate.

This sequence belongs to the peptidase S10 family. In terms of assembly, heterotetramer of two A and two B chains. The A and B chains are linked by a disulfide bond. Post-translationally, the N-terminus of chain A is blocked. Primary leaves of seedlings.

It carries out the reaction (S)-4-hydroxymandelonitrile = 4-hydroxybenzaldehyde + hydrogen cyanide. Involved in cyanogenesis, the release of HCN from injured tissues. Is involved in the catabolism of the cyanogenic glycoside dhurrin. The protein is P-(S)-hydroxymandelonitrile lyase of Sorghum bicolor (Sorghum).